Consider the following 314-residue polypeptide: Methionyl-tRNA formyltransferase (314 aa).

(6S)-5,6,7,8-tetrahydrofolate is bound at residue 113–116; the sequence is SLLP.

This sequence belongs to the Fmt family.

The enzyme catalyses L-methionyl-tRNA(fMet) + (6R)-10-formyltetrahydrofolate = N-formyl-L-methionyl-tRNA(fMet) + (6S)-5,6,7,8-tetrahydrofolate + H(+). Functionally, attaches a formyl group to the free amino group of methionyl-tRNA(fMet). The formyl group appears to play a dual role in the initiator identity of N-formylmethionyl-tRNA by promoting its recognition by IF2 and preventing the misappropriation of this tRNA by the elongation apparatus. The polypeptide is Methionyl-tRNA formyltransferase (Pseudomonas syringae pv. syringae (strain B728a)).